The chain runs to 172 residues: Protein-export protein SecB (172 aa).

This sequence belongs to the SecB family. Homotetramer, a dimer of dimers. One homotetramer interacts with 1 SecA dimer.

The protein resides in the cytoplasm. In terms of biological role, one of the proteins required for the normal export of preproteins out of the cell cytoplasm. It is a molecular chaperone that binds to a subset of precursor proteins, maintaining them in a translocation-competent state. It also specifically binds to its receptor SecA. This Cupriavidus pinatubonensis (strain JMP 134 / LMG 1197) (Cupriavidus necator (strain JMP 134)) protein is Protein-export protein SecB.